The chain runs to 117 residues: MESLVKYVQDEFVDRKDLPEFSAGDTITVYYEIKEGQKTRTQFFRGVVIQKRGTGSSQTFTIRKMSGTVGVERIFPINLPAIQKIEINKKGSVRRARIFYFRGLTGKKARIKEAIRK.

This sequence belongs to the bacterial ribosomal protein bL19 family.

Functionally, this protein is located at the 30S-50S ribosomal subunit interface and may play a role in the structure and function of the aminoacyl-tRNA binding site. The protein is Large ribosomal subunit protein bL19 of Christiangramia forsetii (strain DSM 17595 / CGMCC 1.15422 / KT0803) (Gramella forsetii).